A 205-amino-acid chain; its full sequence is Cytochrome c biogenesis ATP-binding export protein CcmA 2 (205 aa).

Residues 2-205 (LEARDLYCER…LALTGGGAGL (204 aa)) form the ABC transporter domain. 34-41 (GGNGAGKT) contacts ATP.

Belongs to the ABC transporter superfamily. CcmA exporter (TC 3.A.1.107) family. The complex is composed of two ATP-binding proteins (CcmA) and two transmembrane proteins (CcmB).

It localises to the cell inner membrane. The enzyme catalyses heme b(in) + ATP + H2O = heme b(out) + ADP + phosphate + H(+). Part of the ABC transporter complex CcmAB involved in the biogenesis of c-type cytochromes; once thought to export heme, this seems not to be the case, but its exact role is uncertain. Responsible for energy coupling to the transport system. This chain is Cytochrome c biogenesis ATP-binding export protein CcmA 2, found in Salmonella typhimurium (strain LT2 / SGSC1412 / ATCC 700720).